Reading from the N-terminus, the 417-residue chain is Riboflavin biosynthesis protein RibBA (417 aa).

The tract at residues 1–204 is DHBP synthase; it reads MTRFDSIERA…IADLIAWRRK (204 aa). D-ribulose 5-phosphate-binding positions include 28–29, Asp-33, 141–145, and Glu-165; these read RE and RPGHT. Glu-29 serves as a coordination point for Mg(2+). Residue His-144 coordinates Mg(2+). The segment at 205–417 is GTP cyclohydrolase II; that stretch reads HEKHVERVAS…LDDFEAGEML (213 aa). 259 to 263 lines the GTP pocket; it reads RVHSE. Positions 264, 275, and 277 each coordinate Zn(2+). GTP-binding positions include Gln-280, 303–305, and Thr-325; that span reads EGR. Residue Asp-337 is the Proton acceptor; for GTP cyclohydrolase activity of the active site. Arg-339 serves as the catalytic Nucleophile; for GTP cyclohydrolase activity. GTP is bound by residues Thr-360 and Lys-365.

In the N-terminal section; belongs to the DHBP synthase family. The protein in the C-terminal section; belongs to the GTP cyclohydrolase II family. Mg(2+) is required as a cofactor. Requires Mn(2+) as cofactor. It depends on Zn(2+) as a cofactor.

The enzyme catalyses D-ribulose 5-phosphate = (2S)-2-hydroxy-3-oxobutyl phosphate + formate + H(+). It catalyses the reaction GTP + 4 H2O = 2,5-diamino-6-hydroxy-4-(5-phosphoribosylamino)-pyrimidine + formate + 2 phosphate + 3 H(+). It functions in the pathway cofactor biosynthesis; riboflavin biosynthesis; 2-hydroxy-3-oxobutyl phosphate from D-ribulose 5-phosphate: step 1/1. The protein operates within cofactor biosynthesis; riboflavin biosynthesis; 5-amino-6-(D-ribitylamino)uracil from GTP: step 1/4. Its function is as follows. Catalyzes the conversion of D-ribulose 5-phosphate to formate and 3,4-dihydroxy-2-butanone 4-phosphate. In terms of biological role, catalyzes the conversion of GTP to 2,5-diamino-6-ribosylamino-4(3H)-pyrimidinone 5'-phosphate (DARP), formate and pyrophosphate. This chain is Riboflavin biosynthesis protein RibBA, found in Rhodococcus jostii (strain RHA1).